The chain runs to 394 residues: 12-oxophytodienoate reductase 7 (394 aa).

FMN contacts are provided by residues 35–37 and glutamine 110; that span reads PMT. Position 189–192 (189–192) interacts with substrate; sequence HGAH. Catalysis depends on tyrosine 194, which acts as the Proton donor. Arginine 241 serves as a coordination point for FMN. Arginine 286 lines the substrate pocket. FMN-binding positions include glycine 324 and 345-346; that span reads GR. The short motif at 392–394 is the Microbody targeting signal element; the sequence is SRM.

It belongs to the NADH:flavin oxidoreductase/NADH oxidase family. Requires FMN as cofactor.

It is found in the peroxisome. The catalysed reaction is (1S,2S)-OPC-8 + NADP(+) = (9S,13S,15Z)-12-oxophyto-10,15-dienoate + NADPH + H(+). The protein operates within lipid metabolism; oxylipin biosynthesis. Functionally, involved in the biosynthesis of jasmonate (JA) and perhaps in biosynthesis or metabolism of other oxylipin signaling moleclules. In vitro, reduces cis(+)-12-oxophytodienoic acid (cis(+)-OPDA) and cis(-)-OPDA to cis(+)-OPC-8:0 and cis(-)-OPC-8:0, respectively. May be required for the spatial and temporal regulation of JA levels during dehiscence of anthers, promoting the stomium degeneration program. Involved in carbohydrate transport underlying normal lodicule function during anthesis. The chain is 12-oxophytodienoate reductase 7 from Oryza sativa subsp. japonica (Rice).